A 684-amino-acid chain; its full sequence is Kinesin-like protein KIN-13B (684 aa).

2 disordered regions span residues 1–31 and 71–103; these read MSGR…SNGR and GNEF…SPGL. Composition is skewed to polar residues over residues 18 to 31 and 79 to 91; these read LSDN…SNGR and TTPQ…TNQR. A Kinesin motor domain is found at 169–492; sequence KIKVVVRKRP…LRYADRVKSL (324 aa). 258–265 provides a ligand contact to ATP; sequence GQTGSGKT. The interval 574-594 is disordered; the sequence is KPTIQMKSRDMPRPDMKKSNS. The span at 580–594 shows a compositional bias: basic and acidic residues; the sequence is KSRDMPRPDMKKSNS. Positions 596–626 form a coiled coil; the sequence is DNLNALLQEEEDLVNAHRKQVEDTMNIVKEE.

Belongs to the TRAFAC class myosin-kinesin ATPase superfamily. Kinesin family. KIN-13 subfamily.

Acts redundantly with KIN13A to modulate cell wall synthesis and cell expansion via the THE1 pathway. This Arabidopsis thaliana (Mouse-ear cress) protein is Kinesin-like protein KIN-13B.